Reading from the N-terminus, the 148-residue chain is MQRITITIEDDLLAEIDAAAAARGYQNRSEIIRDLARAGLQQTSEDTAQTGPCVAGLVYVYDHAARDLSKRLVQEFHGHHDLALATLHVHLDDNNCMEMTALRGAADEVRHFADHIIAERGVRYGRVVMIPTGEGKPAKARKHGHRHE.

His77, His88, His90, and Cys96 together coordinate Ni(2+).

The protein belongs to the transcriptional regulatory CopG/NikR family. It depends on Ni(2+) as a cofactor.

In terms of biological role, transcriptional regulator. This chain is Putative nickel-responsive regulator, found in Bradyrhizobium diazoefficiens (strain JCM 10833 / BCRC 13528 / IAM 13628 / NBRC 14792 / USDA 110).